We begin with the raw amino-acid sequence, 153 residues long: Large ribosomal subunit protein bL9 (153 aa).

The protein belongs to the bacterial ribosomal protein bL9 family.

In terms of biological role, binds to the 23S rRNA. This chain is Large ribosomal subunit protein bL9, found in Synechococcus sp. (strain JA-3-3Ab) (Cyanobacteria bacterium Yellowstone A-Prime).